The following is a 353-amino-acid chain: Ferrochelatase (353 aa).

Residues H223 and E304 each coordinate Fe cation.

The protein belongs to the ferrochelatase family.

Its subcellular location is the cytoplasm. The catalysed reaction is heme b + 2 H(+) = protoporphyrin IX + Fe(2+). It functions in the pathway porphyrin-containing compound metabolism; protoheme biosynthesis; protoheme from protoporphyrin-IX: step 1/1. Catalyzes the ferrous insertion into protoporphyrin IX. The polypeptide is Ferrochelatase (Mesorhizobium japonicum (strain LMG 29417 / CECT 9101 / MAFF 303099) (Mesorhizobium loti (strain MAFF 303099))).